Here is a 59-residue protein sequence, read N- to C-terminus: Bdellastasin (59 aa).

5 cysteine pairs are disulfide-bonded: Cys-10–Cys-21, Cys-15–Cys-26, Cys-28–Cys-48, Cys-33–Cys-52, and Cys-37–Cys-54. Positions 28-54 constitute an Antistasin-like domain; that stretch reads CSDLHCKVKCEHGFKKDDNGCEYACIC.

The protein resides in the secreted. Its function is as follows. Strong inhibitor of mammalian trypsin, plasmin and acrosin. The protein is Bdellastasin of Hirudo medicinalis (Medicinal leech).